Reading from the N-terminus, the 1346-residue chain is Cytokinesis protein sepH (1346 aa).

Positions 1–50 (MVSRSNEGPEAPHPASRTPGAPAKGRLTRLGSSPSKRDDKAKDDRMGKTS) are disordered. A compositionally biased stretch (basic and acidic residues) spans 35–50 (SKRDDKAKDDRMGKTS). In terms of domain architecture, Protein kinase spans 60–310 (YQLGDCLGRG…ARKLLKHPWI (251 aa)). ATP-binding positions include 66–74 (LGRGAFGSV) and Lys-89. The Proton acceptor role is filled by Asp-182. 3 disordered regions span residues 342–380 (RSPE…PSPV), 446–497 (DESF…HMRR), and 1211–1295 (LCKL…AGAS). 2 stretches are compositionally biased toward polar residues: residues 477-489 (QQAN…SQNG) and 1220-1249 (RGST…NQSK).

Belongs to the protein kinase superfamily. Ser/Thr protein kinase family. CDC7 subfamily. Mg(2+) is required as a cofactor.

The catalysed reaction is L-seryl-[protein] + ATP = O-phospho-L-seryl-[protein] + ADP + H(+). It carries out the reaction L-threonyl-[protein] + ATP = O-phospho-L-threonyl-[protein] + ADP + H(+). Required for early events during cytokinesis including localization of cytoskeletal components to the cytokinetic ring. The polypeptide is Cytokinesis protein sepH (Emericella nidulans (strain FGSC A4 / ATCC 38163 / CBS 112.46 / NRRL 194 / M139) (Aspergillus nidulans)).